We begin with the raw amino-acid sequence, 365 residues long: Probable caffeine synthase 5 (365 aa).

Tyr-18 contacts S-adenosyl-L-homocysteine. Thr-25 lines the caffeine pocket. S-adenosyl-L-homocysteine is bound by residues Cys-61, Asn-66, Asp-98, Leu-99, Ser-134, and Phe-135. Residues Tyr-152, His-155, and Trp-156 each coordinate caffeine. Residues Asn-173, Asp-259, Phe-261, and Asn-262 each contribute to the Mg(2+) site. Phe-317 is a binding site for caffeine.

It belongs to the methyltransferase superfamily. Type-7 methyltransferase family. The cofactor is Mg(2+).

It participates in alkaloid biosynthesis. Functionally, may be involved in the biosynthesis of caffeine. This Camellia sinensis (Tea plant) protein is Probable caffeine synthase 5.